Consider the following 593-residue polypeptide: Translation initiation factor rli1 (593 aa).

2 4Fe-4S ferredoxin-type domains span residues Arg-7–Ile-39 and Arg-46–Leu-75. ABC transporter domains follow at residues Ile-70–Gly-318 and Phe-334–Leu-556. ATP contacts are provided by residues Gly-110–Ser-117 and Gly-382–Thr-389.

The protein belongs to the ABC transporter superfamily. In terms of assembly, component of the multifactor complex (MFC). The complex associates with pre-initiation complexes.

The protein resides in the cytoplasm. It localises to the nucleus. Component of the multifactor complex (MFC) involved in translation initiation. Required for the binding of MFC to the 40S ribosome. Required for the processing and nuclear export of the 60S and 40S ribosomal subunits. This Schizosaccharomyces pombe (strain 972 / ATCC 24843) (Fission yeast) protein is Translation initiation factor rli1 (rli1).